We begin with the raw amino-acid sequence, 406 residues long: MNDADIHKELFQHTKELADHYLLNTYARYDVAFRYGVNELLFDFDNKQYIDFHCGVAVTNLGHADPDIIEVVRSQADKLFHTSNLFYSEEASKLAELLILNSFPGKVFLTNSGTEAIEGAFKLARKYAYSKSIVDPIILSLEKSFHGRSVSGMSLTGQDKIRKGYGELLKGIEFIEPNNDEALVAAFERYQGRIVALIEEPILGESGIIPLSRNFLTLSRELTEENEALLIFDEIQTGMGRTGTLFAFETMGFSPDAMTLAKGLGSGFPIGALIVGEKYQDLFTQGSHGSTFGGNHLAAAVAYETIRIIQTREILNNVNICSDIAFTRLREMQEKYPVISEVRGKGLHIGLELKVPSKPIAEACLSAGLVVNATADNVVRIMPPLTISTDFLNQGLDILESVLKQN.

Pyridoxal 5'-phosphate contacts are provided by residues 113 to 114 and Phe-145; that span reads GT. Arg-148 lines the N(2)-acetyl-L-ornithine pocket. Residue 233 to 236 coordinates pyridoxal 5'-phosphate; sequence DEIQ. Lys-262 carries the post-translational modification N6-(pyridoxal phosphate)lysine. Residue Ser-290 participates in N(2)-acetyl-L-ornithine binding. Thr-291 contributes to the pyridoxal 5'-phosphate binding site.

The protein belongs to the class-III pyridoxal-phosphate-dependent aminotransferase family. ArgD subfamily. As to quaternary structure, homodimer. It depends on pyridoxal 5'-phosphate as a cofactor.

Its subcellular location is the cytoplasm. The catalysed reaction is N(2)-acetyl-L-ornithine + 2-oxoglutarate = N-acetyl-L-glutamate 5-semialdehyde + L-glutamate. It participates in amino-acid biosynthesis; L-arginine biosynthesis; N(2)-acetyl-L-ornithine from L-glutamate: step 4/4. The polypeptide is Acetylornithine aminotransferase (Leptospira interrogans serogroup Icterohaemorrhagiae serovar Lai (strain 56601)).